Here is a 277-residue protein sequence, read N- to C-terminus: Bifunctional protein FolD (277 aa).

NADP(+) contacts are provided by residues 164–166, Ser189, and Thr230; that span reads GRS.

It belongs to the tetrahydrofolate dehydrogenase/cyclohydrolase family. Homodimer.

It carries out the reaction (6R)-5,10-methylene-5,6,7,8-tetrahydrofolate + NADP(+) = (6R)-5,10-methenyltetrahydrofolate + NADPH. The enzyme catalyses (6R)-5,10-methenyltetrahydrofolate + H2O = (6R)-10-formyltetrahydrofolate + H(+). Its pathway is one-carbon metabolism; tetrahydrofolate interconversion. Catalyzes the oxidation of 5,10-methylenetetrahydrofolate to 5,10-methenyltetrahydrofolate and then the hydrolysis of 5,10-methenyltetrahydrofolate to 10-formyltetrahydrofolate. The protein is Bifunctional protein FolD of Clostridium perfringens (strain SM101 / Type A).